The sequence spans 138 residues: MTEQQARIVAFDDVPPNRRRGGDVRALLTPTTAGATSGFMGVAVVRPGERISEHYHPYSEEFVYVTAGAFEVDLDDVPHPLRTGQGLLIPKDVRHRFRNTGDVEARLVFHLGPLAPRPDLGHVDTEETDETAPAGVVS.

Residues valine 42–valine 108 enclose the Cupin type-2 domain. A disordered region spans residues proline 118 to serine 138.

The protein belongs to the SchB/CurC family.

The protein is Protein SchB (schB) of Streptomyces halstedii.